The following is a 131-amino-acid chain: Small ribosomal subunit protein uS8 (131 aa).

Belongs to the universal ribosomal protein uS8 family. As to quaternary structure, part of the 30S ribosomal subunit. Contacts proteins S5 and S12.

Its function is as follows. One of the primary rRNA binding proteins, it binds directly to 16S rRNA central domain where it helps coordinate assembly of the platform of the 30S subunit. The polypeptide is Small ribosomal subunit protein uS8 (Wolbachia pipientis subsp. Culex pipiens (strain wPip)).